An 89-amino-acid chain; its full sequence is Large ribosomal subunit protein eL34 (89 aa).

Belongs to the eukaryotic ribosomal protein eL34 family.

This chain is Large ribosomal subunit protein eL34, found in Methanococcus vannielii (strain ATCC 35089 / DSM 1224 / JCM 13029 / OCM 148 / SB).